Reading from the N-terminus, the 353-residue chain is Thiamine-phosphate synthase (353 aa).

The unknown stretch occupies residues 1 to 128 (MKSMPVAPIA…AASAAAIRYG (128 aa)). Residues 129–353 (LYDLEVTVLQ…TSLQLLEALR (225 aa)) are thiamine-phosphate synthase. Residues 185 to 189 (QYRNK) and asparagine 217 contribute to the 4-amino-2-methyl-5-(diphosphooxymethyl)pyrimidine site. Positions 218 and 237 each coordinate Mg(2+). Serine 256 serves as a coordination point for 4-amino-2-methyl-5-(diphosphooxymethyl)pyrimidine. 282–284 (TAT) serves as a coordination point for 2-[(2R,5Z)-2-carboxy-4-methylthiazol-5(2H)-ylidene]ethyl phosphate. Lysine 285 contacts 4-amino-2-methyl-5-(diphosphooxymethyl)pyrimidine. Residue glycine 312 participates in 2-[(2R,5Z)-2-carboxy-4-methylthiazol-5(2H)-ylidene]ethyl phosphate binding.

Belongs to the thiamine-phosphate synthase family. Requires Mg(2+) as cofactor.

It catalyses the reaction 2-[(2R,5Z)-2-carboxy-4-methylthiazol-5(2H)-ylidene]ethyl phosphate + 4-amino-2-methyl-5-(diphosphooxymethyl)pyrimidine + 2 H(+) = thiamine phosphate + CO2 + diphosphate. The enzyme catalyses 2-(2-carboxy-4-methylthiazol-5-yl)ethyl phosphate + 4-amino-2-methyl-5-(diphosphooxymethyl)pyrimidine + 2 H(+) = thiamine phosphate + CO2 + diphosphate. It carries out the reaction 4-methyl-5-(2-phosphooxyethyl)-thiazole + 4-amino-2-methyl-5-(diphosphooxymethyl)pyrimidine + H(+) = thiamine phosphate + diphosphate. The protein operates within cofactor biosynthesis; thiamine diphosphate biosynthesis; thiamine phosphate from 4-amino-2-methyl-5-diphosphomethylpyrimidine and 4-methyl-5-(2-phosphoethyl)-thiazole: step 1/1. Condenses 4-methyl-5-(beta-hydroxyethyl)thiazole monophosphate (THZ-P) and 2-methyl-4-amino-5-hydroxymethyl pyrimidine pyrophosphate (HMP-PP) to form thiamine monophosphate (TMP). This Prochlorococcus marinus (strain MIT 9303) protein is Thiamine-phosphate synthase.